The sequence spans 571 residues: MSVTGQDNKELQQEFVIVGEPIVPGIGLGKALLLGKSSLRIRELTLPQEEVEHEISRYYKALKRSRSDLAALEKEAKGKQGYQEIASILQAHLEIIKDPLLTEEVVKTIRKDRKNAEFVFSSVMGEIEKSLCAVQKTTATRVDRVQDIHDISNRVIGHLCCQHKSSLGEFDQNLIVFSEELTPSEAANANPEYIRGFVSLEGAKTSHTAIVSLAKNIPYVANFTTELWDTIKEFSGTLVLINGDKGEITFNPQLSTIQTYYRKQASVSVTVPVQVQTGKNLPLISLSAQIVSTEELPMIERESPGTSVGLFRSEFMAFSLGRLPCVEEQADQYAQLVQFQCSDIHVLRLFDFGEDKECPCISSSHRSVRWLLEQEKVLKEQLQAIAIVSRIGRLKVLIPGVIDASEIALVKRLFQEEIRLLKGISENILWGSMIEIPSAVWMIEEILQESSFVALGTNDLAQYTLGTSRERSLLGERSRVPHPSVIRMIHHVVEQAKQKNVPVSVCGEMAGDPALLPMFLGLGVKELSAVIPAINSLKMRLLDLNSRECSRLTKQLLRAKTYEEVHQLLYV.

The active-site Tele-phosphohistidine intermediate is the His-207. Arg-312 and Arg-348 together coordinate phosphoenolpyruvate. Mg(2+) contacts are provided by Glu-435 and Asp-459. Residues 458–459 (ND) and Arg-469 each bind phosphoenolpyruvate. The Proton donor role is filled by Cys-506.

Belongs to the PEP-utilizing enzyme family. As to quaternary structure, homodimer. Requires Mg(2+) as cofactor.

It localises to the cytoplasm. The enzyme catalyses L-histidyl-[protein] + phosphoenolpyruvate = N(pros)-phospho-L-histidyl-[protein] + pyruvate. Its function is as follows. General (non sugar-specific) component of the phosphoenolpyruvate-dependent sugar phosphotransferase system (sugar PTS). This major carbohydrate active-transport system catalyzes the phosphorylation of incoming sugar substrates concomitantly with their translocation across the cell membrane. Enzyme I transfers the phosphoryl group from phosphoenolpyruvate (PEP) to the phosphoryl carrier protein (HPr). This chain is Phosphoenolpyruvate-protein phosphotransferase (ptsI), found in Chlamydia trachomatis serovar D (strain ATCC VR-885 / DSM 19411 / UW-3/Cx).